A 141-amino-acid polypeptide reads, in one-letter code: Large ribosomal subunit protein uL11A (141 aa).

This sequence belongs to the universal ribosomal protein uL11 family. Part of the ribosomal stalk of the 50S ribosomal subunit. Interacts with L10 and the large rRNA to form the base of the stalk. L10 forms an elongated spine to which L12 dimers bind in a sequential fashion forming a multimeric L10(L12)X complex. Post-translationally, one or more lysine residues are methylated.

Forms part of the ribosomal stalk which helps the ribosome interact with GTP-bound translation factors. The chain is Large ribosomal subunit protein uL11A from Halalkalibacterium halodurans (strain ATCC BAA-125 / DSM 18197 / FERM 7344 / JCM 9153 / C-125) (Bacillus halodurans).